Reading from the N-terminus, the 835-residue chain is Ribonuclease R (835 aa).

The 327-residue stretch at 267–593 (RVDLRELPLV…LLHRAIKYLI (327 aa)) folds into the RNB domain. The 82-residue stretch at 652–733 (GDELEGVIAN…DDKQIDFELV (82 aa)) folds into the S1 motif domain. A compositionally biased stretch (basic and acidic residues) spans 739 to 754 (LRGEGKTAKKRAAEAK). A disordered region spans residues 739–835 (LRGEGKTAKK…KTKRTKQDAQ (97 aa)). Over residues 755-764 (RKAKEKKRAA) the composition is skewed to basic residues. A compositionally biased stretch (low complexity) spans 765–777 (TRSSSKESATARA). The segment covering 783-793 (PTKRPEQTDSG) has biased composition (basic and acidic residues). A compositionally biased stretch (basic residues) spans 809–829 (KPKVKKAHKKKPHSKPKKTKR).

Belongs to the RNR ribonuclease family. RNase R subfamily.

Its subcellular location is the cytoplasm. The enzyme catalyses Exonucleolytic cleavage in the 3'- to 5'-direction to yield nucleoside 5'-phosphates.. Functionally, 3'-5' exoribonuclease that releases 5'-nucleoside monophosphates and is involved in maturation of structured RNAs. The polypeptide is Ribonuclease R (Vibrio parahaemolyticus serotype O3:K6 (strain RIMD 2210633)).